The primary structure comprises 70 residues: MGSKIFCCCRKTSEGSSTTVGFHNPRMFEQHHPRSFNLNTNSLHSAVPKRHPRLPYDNRMMLKACILRRP.

As to expression, expressed in Testis.

The polypeptide is Testis-expressed protein 53 (Homo sapiens (Human)).